Here is a 102-residue protein sequence, read N- to C-terminus: Putative defensin-like protein 152 (102 aa).

Residues 1–29 form the signal peptide; sequence MKKASQLSTTILTIFIVLAIGMMVKGTVG. Disulfide bonds link cysteine 34–cysteine 93, cysteine 51–cysteine 71, cysteine 56–cysteine 87, and cysteine 60–cysteine 89.

It belongs to the DEFL family.

The protein localises to the secreted. In Arabidopsis thaliana (Mouse-ear cress), this protein is Putative defensin-like protein 152 (LCR11).